Here is an 81-residue protein sequence, read N- to C-terminus: Small ribosomal subunit protein bS16 (81 aa).

Belongs to the bacterial ribosomal protein bS16 family.

The protein is Small ribosomal subunit protein bS16 of Lachnospira eligens (strain ATCC 27750 / DSM 3376 / VPI C15-48 / C15-B4) (Eubacterium eligens).